An 80-amino-acid chain; its full sequence is Metallothionein-like protein BIF98 (80 aa).

It belongs to the metallothionein superfamily. Type 15 family.

Its function is as follows. Metallothioneins have a high content of cysteine residues that bind various heavy metals. The sequence is that of Metallothionein-like protein BIF98 from Brassica rapa subsp. pekinensis (Chinese cabbage).